Here is a 176-residue protein sequence, read N- to C-terminus: Cathelicidin-2 (176 aa).

A signal peptide spans methionine 1 to alanine 29. A Pyrrolidone carboxylic acid modification is found at glutamine 30. Positions glutamine 30–valine 130 are excised as a propeptide. Disulfide bonds link cysteine 85–cysteine 96 and cysteine 107–cysteine 124. The interval proline 135–arginine 176 is disordered. The segment covering isoleucine 141–arginine 176 has biased composition (pro residues). The residue at position 173 (proline 173) is a Proline amide. Positions glycine 174–arginine 176 are cleaved as a propeptide — removed in mature form.

This sequence belongs to the cathelicidin family. Elastase is responsible for its maturation.

It localises to the secreted. In terms of biological role, binds to the lipid A moiety of bacterial lipopolysaccharides (LPS), a glycolipid present in the outer membrane of all Gram-negative bacteria. Shows a potent antimicrobial activity against the Gram-negative bacteria E.coli, S.typhimurium and P.aeruginosa. Less active against the Gram-positive bacteria S.aureus, L.monocytogenes and B.subtilis. This Capra hircus (Goat) protein is Cathelicidin-2 (CATHL2).